Reading from the N-terminus, the 90-residue chain is Small ribosomal subunit protein bS16 (90 aa).

The protein belongs to the bacterial ribosomal protein bS16 family.

The chain is Small ribosomal subunit protein bS16 from Lactiplantibacillus plantarum (strain ATCC BAA-793 / NCIMB 8826 / WCFS1) (Lactobacillus plantarum).